Reading from the N-terminus, the 429-residue chain is [LysW]-aminoadipate semialdehyde transaminase (429 aa).

Pyridoxal 5'-phosphate-binding positions include 112–113 (GT) and Phe-139. Arg-142 contacts substrate. Position 226–229 (226–229 (DEIQ)) interacts with pyridoxal 5'-phosphate. The residue at position 255 (Lys-255) is an N6-(pyridoxal phosphate)lysine. Thr-283 serves as a coordination point for substrate. A pyridoxal 5'-phosphate-binding site is contributed by Thr-284. Residues 408-429 (LRAQQSEMGQQQVSQGESVQTE) are disordered. Residues 411–429 (QQSEMGQQQVSQGESVQTE) show a composition bias toward low complexity.

Belongs to the class-III pyridoxal-phosphate-dependent aminotransferase family. LysJ subfamily. In terms of assembly, homodimer. Pyridoxal 5'-phosphate is required as a cofactor.

Its subcellular location is the cytoplasm. It catalyses the reaction [amino-group carrier protein]-C-terminal-gamma-(L-lysyl)-L-glutamate + 2-oxoglutarate = [amino-group carrier protein]-C-terminal-N-(1-carboxy-5-oxopentan-1-yl)-L-glutamine + L-glutamate. The protein operates within amino-acid biosynthesis; L-lysine biosynthesis via AAA pathway; L-lysine from L-alpha-aminoadipate (Thermus route): step 4/5. In terms of biological role, catalyzes the transfer of the amino group of L-glutamate to [LysW]-aminoadipate 6-semialdehyde, generating [LysW]-gamma-L-lysine. The protein is [LysW]-aminoadipate semialdehyde transaminase of Deinococcus radiodurans (strain ATCC 13939 / DSM 20539 / JCM 16871 / CCUG 27074 / LMG 4051 / NBRC 15346 / NCIMB 9279 / VKM B-1422 / R1).